The following is a 151-amino-acid chain: Inactive oocyte-specific homeobox protein 2 (151 aa).

Residues 1–97 form a disordered region; sequence MAEGPSLHPK…PMASRKFRKE (97 aa). Positions 37–54 are enriched in polar residues; sequence MRQSPLVTPGSTTKSSLS.

It belongs to the paired homeobox family. Obox subfamily. As to expression, specifically expressed in oocytes and early embryos.

In contrast to other Obox family proteins, displays a truncated homeobox domain and does not bind DNA. The polypeptide is Inactive oocyte-specific homeobox protein 2 (Mus musculus (Mouse)).